Here is a 136-residue protein sequence, read N- to C-terminus: Histone H3.3C-like (136 aa).

The residue at position 3 (Arg-3) is an Asymmetric dimethylarginine; by PRMT6; alternate. Arg-3 carries the post-translational modification Citrulline; alternate. Thr-4 bears the Phosphothreonine; by HASPIN mark. Lys-5 carries the post-translational modification Allysine; alternate. The residue at position 5 (Lys-5) is an N6,N6,N6-trimethyllysine; alternate. Residue Lys-5 is modified to N6,N6-dimethyllysine; alternate. Position 5 is an N6-(2-hydroxyisobutyryl)lysine; alternate (Lys-5). Residue Lys-5 is modified to N6-(beta-hydroxybutyryl)lysine; alternate. Lys-5 bears the N6-acetyllysine; alternate mark. Residue Lys-5 is modified to N6-methyllysine; alternate. At Thr-7 the chain carries Phosphothreonine; by PKC. Lys-10 is subject to N6,N6,N6-trimethyllysine; alternate. The residue at position 10 (Lys-10) is an N6,N6-dimethyllysine; alternate. The residue at position 10 (Lys-10) is an N6-(2-hydroxyisobutyryl)lysine; alternate. The residue at position 10 (Lys-10) is an N6-acetyllysine; alternate. Position 10 is an N6-methyllysine; alternate (Lys-10). Residue Ser-11 is modified to ADP-ribosylserine; alternate. A Phosphoserine; alternate; by AURKB, AURKC, RPS6KA3, RPS6KA4 and RPS6KA5 modification is found at Ser-11. Thr-12 is modified (phosphothreonine; by PKC). Residue Lys-15 is modified to N6-(2-hydroxyisobutyryl)lysine; alternate. N6-(beta-hydroxybutyryl)lysine; alternate is present on Lys-15. N6-acetyllysine; alternate is present on Lys-15. Position 15 is an N6-glutaryllysine; alternate (Lys-15). N6-succinyllysine; alternate is present on Lys-15. Arg-18 bears the Citrulline; alternate mark. Arg-18 is subject to Asymmetric dimethylarginine; by CARM1; alternate. Lys-19 and Lys-28 each carry N6-(2-hydroxyisobutyryl)lysine; alternate. Lys-19 carries the N6-(beta-hydroxybutyryl)lysine; alternate modification. N6-acetyllysine; alternate occurs at positions 19 and 28. Residues Lys-19 and Lys-28 each carry the N6-methyllysine; alternate modification. An N6-glutaryllysine; alternate mark is found at Lys-19 and Lys-28. Lys-19 is subject to N6-butyryllysine; alternate. Position 28 is an N6,N6,N6-trimethyllysine; alternate (Lys-28). Residue Lys-28 is modified to N6,N6-dimethyllysine; alternate. Ser-29 is modified (ADP-ribosylserine; alternate). At Ser-29 the chain carries Phosphoserine; alternate; by AURKB, AURKC and RPS6KA5. At Ser-32 the chain carries Phosphoserine. N6-methyllysine is present on Lys-38. Tyr-42 carries the phosphotyrosine modification. Lys-57 bears the N6,N6,N6-trimethyllysine; alternate mark. The residue at position 57 (Lys-57) is an N6-(2-hydroxyisobutyryl)lysine; alternate. N6-(beta-hydroxybutyryl)lysine; alternate is present on Lys-57. The residue at position 57 (Lys-57) is an N6-acetyllysine; alternate. Residue Lys-57 is modified to N6-glutaryllysine; alternate. The residue at position 57 (Lys-57) is an N6-succinyllysine; alternate. Lys-57 carries the post-translational modification N6-methyllysine; by EHMT2; alternate. The residue at position 58 (Ser-58) is a Phosphoserine. 2 positions are modified to N6-(2-hydroxyisobutyryl)lysine; alternate: Lys-65 and Lys-80. Lys-65 and Lys-80 each carry N6-methyllysine; alternate. Lys-80 carries the post-translational modification N6,N6,N6-trimethyllysine; alternate. Lys-80 carries the post-translational modification N6,N6-dimethyllysine; alternate. An N6-acetyllysine; alternate modification is found at Lys-80. Lys-80 is modified (N6-glutaryllysine; alternate). Lys-80 carries the N6-succinyllysine; alternate modification. Phosphothreonine is present on Thr-81. Phosphoserine is present on Ser-87.

The protein belongs to the histone H3 family. As to quaternary structure, the nucleosome is a histone octamer containing two molecules each of H2A, H2B, H3 and H4 assembled in one H3-H4 heterotetramer and two H2A-H2B heterodimers. The octamer wraps approximately 147 bp of DNA. Acetylation is generally linked to gene activation. Acetylation on Lys-19 favors methylation at Arg-18. In terms of processing, citrullination at Arg-18 by PADI4 impairs methylation and represses transcription. Post-translationally, asymmetric dimethylation at Arg-18 (H3R17me2a) by CARM1 is linked to gene activation. Asymmetric dimethylation at Arg-3 (H3R2me2a) by PRMT6 is linked to gene repression and is mutually exclusive with H3 Lys-5 methylation (H3K4me2 and H3K4me3). H3R2me2a is present at the 3' of genes regardless of their transcription state and is enriched on inactive promoters, while it is absent on active promoters. Methylation at Lys-5 (H3K4me) and Lys-80 (H3K79me) are linked to gene activation. Methylation at Lys-5 (H3K4me) facilitates subsequent acetylation of H3 and H4. Methylation at Lys-80 (H3K79me) is associated with DNA double-strand break (DSB) responses and is a specific target for TP53BP1. Methylation at Lys-10 (H3K9me) and Lys-28 (H3K27me) are linked to gene repression. Methylation at Lys-10 (H3K9me) is a specific target for HP1 proteins (CBX1, CBX3 and CBX5) and prevents subsequent phosphorylation at Ser-11 (H3S10ph) and acetylation of H3 and H4. Methylation at Lys-5 (H3K4me) and Lys-80 (H3K79me) require preliminary monoubiquitination of H2B at 'Lys-120'. Methylation at Lys-10 (H3K9me) and Lys-28 (H3K27me) are enriched in inactive X chromosome chromatin. Monomethylation at Lys-57 (H3K56me1) by EHMT2/G9A in G1 phase promotes interaction with PCNA and is required for DNA replication. In terms of processing, phosphorylated at Thr-4 (H3T3ph) by HASPIN during prophase and dephosphorylated during anaphase. Phosphorylation at Ser-11 (H3S10ph) by AURKB is crucial for chromosome condensation and cell-cycle progression during mitosis and meiosis. In addition phosphorylation at Ser-11 (H3S10ph) by RPS6KA4 and RPS6KA5 is important during interphase because it enables the transcription of genes following external stimulation, like mitogens, stress, growth factors or UV irradiation and result in the activation of genes, such as c-fos and c-jun. Phosphorylation at Ser-11 (H3S10ph), which is linked to gene activation, prevents methylation at Lys-10 (H3K9me) but facilitates acetylation of H3 and H4. Phosphorylation at Ser-11 (H3S10ph) by AURKB mediates the dissociation of HP1 proteins (CBX1, CBX3 and CBX5) from heterochromatin. Phosphorylation at Ser-11 (H3S10ph) is also an essential regulatory mechanism for neoplastic cell transformation. Phosphorylated at Ser-29 (H3S28ph) by MAP3K20 isoform 1, RPS6KA5 or AURKB during mitosis or upon ultraviolet B irradiation. Phosphorylation at Thr-7 (H3T6ph) by PRKCB is a specific tag for epigenetic transcriptional activation that prevents demethylation of Lys-5 (H3K4me) by LSD1/KDM1A. At centromeres, specifically phosphorylated at Thr-12 (H3T11ph) from prophase to early anaphase, by DAPK3 and PKN1. Phosphorylation at Thr-12 (H3T11ph) by PKN1 or isoform M2 of PKM (PKM2) is a specific tag for epigenetic transcriptional activation that promotes demethylation of Lys-10 (H3K9me) by KDM4C/JMJD2C. Phosphorylation at Tyr-42 (H3Y41ph) by JAK2 promotes exclusion of CBX5 (HP1 alpha) from chromatin. Post-translationally, lysine deamination at Lys-5 (H3K4all) to form allysine is mediated by LOXL2. Allysine formation by LOXL2 only takes place on H3K4me3 and results in gene repression. Butyrylation of histones marks active promoters and competes with histone acetylation. It is present during late spermatogenesis. In terms of processing, succinylation at Lys-80 (H3K79succ) by KAT2A takes place with a maximum frequency around the transcription start sites of genes. It gives a specific tag for epigenetic transcription activation. Post-translationally, serine ADP-ribosylation constitutes the primary form of ADP-ribosylation of proteins in response to DNA damage. Serine ADP-ribosylation at Ser-11 (H3S10ADPr) is mutually exclusive with phosphorylation at Ser-11 (H3S10ph) and impairs acetylation at Lys-10 (H3K9ac).

The protein localises to the nucleus. The protein resides in the chromosome. In terms of biological role, core component of nucleosome. Nucleosomes wrap and compact DNA into chromatin, limiting DNA accessibility to the cellular machineries which require DNA as a template. Histones thereby play a central role in transcription regulation, DNA repair, DNA replication and chromosomal stability. DNA accessibility is regulated via a complex set of post-translational modifications of histones, also called histone code, and nucleosome remodeling. In Bos taurus (Bovine), this protein is Histone H3.3C-like.